The following is a 206-amino-acid chain: Large ribosomal subunit protein uL4 (206 aa).

The tract at residues 47–76 is disordered; the sequence is GTQSAKTRAEVSGGGIKPWRQKGTGRARQG.

The protein belongs to the universal ribosomal protein uL4 family. In terms of assembly, part of the 50S ribosomal subunit.

Functionally, one of the primary rRNA binding proteins, this protein initially binds near the 5'-end of the 23S rRNA. It is important during the early stages of 50S assembly. It makes multiple contacts with different domains of the 23S rRNA in the assembled 50S subunit and ribosome. In terms of biological role, forms part of the polypeptide exit tunnel. The chain is Large ribosomal subunit protein uL4 from Clostridium botulinum (strain Okra / Type B1).